A 445-amino-acid chain; its full sequence is Tol-Pal system protein TolB (445 aa).

Residues 1 to 26 (MLNRRNFIRTTSALAASTALPGYAFG) form the signal peptide.

It belongs to the TolB family. The Tol-Pal system is composed of five core proteins: the inner membrane proteins TolA, TolQ and TolR, the periplasmic protein TolB and the outer membrane protein Pal. They form a network linking the inner and outer membranes and the peptidoglycan layer.

The protein localises to the periplasm. In terms of biological role, part of the Tol-Pal system, which plays a role in outer membrane invagination during cell division and is important for maintaining outer membrane integrity. The chain is Tol-Pal system protein TolB from Jannaschia sp. (strain CCS1).